Reading from the N-terminus, the 273-residue chain is Bis(5'-nucleosyl)-tetraphosphatase, symmetrical (273 aa).

The protein belongs to the Ap4A hydrolase family.

It carries out the reaction P(1),P(4)-bis(5'-adenosyl) tetraphosphate + H2O = 2 ADP + 2 H(+). Functionally, hydrolyzes diadenosine 5',5'''-P1,P4-tetraphosphate to yield ADP. The sequence is that of Bis(5'-nucleosyl)-tetraphosphatase, symmetrical from Aeromonas salmonicida (strain A449).